A 338-amino-acid chain; its full sequence is Large ribosomal subunit protein uL10 (338 aa).

Residues 302–338 are disordered; the sequence is IAAQPQPAEEAEEKVEEEEEEEKEEEEALAGLGALFG. Acidic residues predominate over residues 310–329; it reads EEAEEKVEEEEEEEKEEEEA.

This sequence belongs to the universal ribosomal protein uL10 family. In terms of assembly, part of the 50S ribosomal subunit. Forms part of the ribosomal stalk which helps the ribosome interact with GTP-bound translation factors. Forms a heptameric L10(L12)2(L12)2(L12)2 complex, where L10 forms an elongated spine to which the L12 dimers bind in a sequential fashion.

Functionally, forms part of the ribosomal stalk, playing a central role in the interaction of the ribosome with GTP-bound translation factors. This chain is Large ribosomal subunit protein uL10, found in Thermococcus sibiricus (strain DSM 12597 / MM 739).